We begin with the raw amino-acid sequence, 215 residues long: Protein N-lysine methyltransferase METTL21A (215 aa).

S-adenosyl-L-methionine-binding positions include Trp47, 73–75 (GAG), Asp94, Trp125, and Ala141.

This sequence belongs to the methyltransferase superfamily. METTL21 family.

Its subcellular location is the cytoplasm. The catalysed reaction is L-lysyl-[protein] + 3 S-adenosyl-L-methionine = N(6),N(6),N(6)-trimethyl-L-lysyl-[protein] + 3 S-adenosyl-L-homocysteine + 3 H(+). Protein-lysine methyltransferase that selectively trimethylates residues in heat shock protein 70 (HSP70) family members. This is Protein N-lysine methyltransferase METTL21A (mettl21a) from Xenopus tropicalis (Western clawed frog).